A 100-amino-acid chain; its full sequence is Urease subunit gamma (100 aa).

Belongs to the urease gamma subunit family. As to quaternary structure, heterotrimer of UreA (gamma), UreB (beta) and UreC (alpha) subunits. Three heterotrimers associate to form the active enzyme.

The protein resides in the cytoplasm. It catalyses the reaction urea + 2 H2O + H(+) = hydrogencarbonate + 2 NH4(+). It participates in nitrogen metabolism; urea degradation; CO(2) and NH(3) from urea (urease route): step 1/1. The chain is Urease subunit gamma from Bordetella pertussis (strain Tohama I / ATCC BAA-589 / NCTC 13251).